The primary structure comprises 318 residues: Protein disulfide-isomerase MPD1 (318 aa).

A signal peptide spans 1–21; the sequence is MLFLNIIKLLLGLFIMNEVKA. A Thioredoxin domain is found at 22-158; the sequence is QNFYDSDPHI…SLSRIRSYVK (137 aa). Asparagine 47 carries N-linked (GlcNAc...) asparagine glycosylation. The cysteines at positions 59 and 62 are disulfide-linked. Asparagine 307 is a glycosylation site (N-linked (GlcNAc...) asparagine). Residues 315-318 carry the Prevents secretion from ER motif; that stretch reads HDEL.

It belongs to the protein disulfide isomerase family. Interacts with CNE1 and EPS1.

Its subcellular location is the endoplasmic reticulum lumen. The enzyme catalyses Catalyzes the rearrangement of -S-S- bonds in proteins.. In terms of biological role, participates in the folding of proteins containing disulfide bonds. The protein is Protein disulfide-isomerase MPD1 (MPD1) of Saccharomyces cerevisiae (strain ATCC 204508 / S288c) (Baker's yeast).